Consider the following 385-residue polypeptide: Type III polyketide synthase C (385 aa).

56–63 (KLQHLCKS) contributes to the CoA binding site. The Nucleophile role is filled by cysteine 165. 217-218 (GD) serves as a coordination point for substrate. Residues leucine 267, 307–310 (GGPA), and alanine 310 each bind CoA.

This sequence belongs to the thiolase-like superfamily. Chalcone/stilbene synthases family. In terms of assembly, homodimer.

It localises to the endoplasmic reticulum. Its pathway is secondary metabolite biosynthesis; flavonoid biosynthesis. Functionally, plant type III polyketide synthases (PKSs) that catalyzes the condensation of malonyl-CoA units with various CoA ester starter molecules to generate a diverse array of natural products including long-chain alkyl alpha-pyrones. This chain is Type III polyketide synthase C, found in Arabidopsis thaliana (Mouse-ear cress).